A 337-amino-acid polypeptide reads, in one-letter code: MANSC domain-containing protein 4 (337 aa).

The signal sequence occupies residues 1 to 18 (MRAVELLLLLGLASMVHG). Over 19 to 278 (LCSPTVFYRD…SSENEEPWDG (260 aa)) the chain is Extracellular. The 81-residue stretch at 33 to 113 (RFPGMLLDLE…LEPGASAILY (81 aa)) folds into the MANSC domain. 3 N-linked (GlcNAc...) asparagine glycosylation sites follow: asparagine 114, asparagine 227, and asparagine 251. Composition is skewed to polar residues over residues 216–230 (SPST…NKTI) and 239–260 (TRVS…VNKT). Residues 216–277 (SPSTDFTHSP…HSSENEEPWD (62 aa)) are disordered. The helical transmembrane segment at 279–299 (APASAGVWLACVTLGAAVISL) threads the bilayer. At 300 to 337 (CCRVVLGTSRCCGKRQGWSHMGQRSASGCRRNTLKENS) the chain is on the cytoplasmic side. The disordered stretch occupies residues 314–337 (RQGWSHMGQRSASGCRRNTLKENS).

It localises to the membrane. The polypeptide is MANSC domain-containing protein 4 (Mansc4) (Mus musculus (Mouse)).